The following is a 460-amino-acid chain: GTPase Der (460 aa).

2 consecutive EngA-type G domains span residues 2 to 164 (QSII…HEEF) and 196 to 368 (IRVG…ENFT). GTP contacts are provided by residues 8–15 (GKPNVGKS), 55–59 (DSGGL), 116–119 (NKVD), 202–209 (GRVNVGKS), 249–253 (DTAGI), and 313–316 (NKWD). The region spanning 369 to 453 (QKIQTSKLNT…PLVIASRKKG (85 aa)) is the KH-like domain.

This sequence belongs to the TRAFAC class TrmE-Era-EngA-EngB-Septin-like GTPase superfamily. EngA (Der) GTPase family. As to quaternary structure, associates with the 50S ribosomal subunit.

Its function is as follows. GTPase that plays an essential role in the late steps of ribosome biogenesis. This is GTPase Der from Campylobacter jejuni subsp. jejuni serotype O:6 (strain 81116 / NCTC 11828).